The sequence spans 238 residues: Ribonuclease PH (238 aa).

Residues Arg86 and 124–126 contribute to the phosphate site; that span reads GTR.

The protein belongs to the RNase PH family. In terms of assembly, homohexameric ring arranged as a trimer of dimers.

The enzyme catalyses tRNA(n+1) + phosphate = tRNA(n) + a ribonucleoside 5'-diphosphate. Its function is as follows. Phosphorolytic 3'-5' exoribonuclease that plays an important role in tRNA 3'-end maturation. Removes nucleotide residues following the 3'-CCA terminus of tRNAs; can also add nucleotides to the ends of RNA molecules by using nucleoside diphosphates as substrates, but this may not be physiologically important. Probably plays a role in initiation of 16S rRNA degradation (leading to ribosome degradation) during starvation. The sequence is that of Ribonuclease PH from Erwinia tasmaniensis (strain DSM 17950 / CFBP 7177 / CIP 109463 / NCPPB 4357 / Et1/99).